Reading from the N-terminus, the 269-residue chain is Shikimate dehydrogenase (NADP(+)) (269 aa).

Shikimate-binding positions include 14–16 and Thr61; that span reads SLS. Lys65 functions as the Proton acceptor in the catalytic mechanism. Glu76 contacts NADP(+). Shikimate is bound by residues Asn85 and Asp99. NADP(+) is bound by residues 123 to 127, 146 to 151, and Ile209; these read GAGGA and NRTPER. Shikimate is bound at residue Tyr211. Gly231 provides a ligand contact to NADP(+).

The protein belongs to the shikimate dehydrogenase family. In terms of assembly, homodimer.

It carries out the reaction shikimate + NADP(+) = 3-dehydroshikimate + NADPH + H(+). The protein operates within metabolic intermediate biosynthesis; chorismate biosynthesis; chorismate from D-erythrose 4-phosphate and phosphoenolpyruvate: step 4/7. Its function is as follows. Involved in the biosynthesis of the chorismate, which leads to the biosynthesis of aromatic amino acids. Catalyzes the reversible NADPH linked reduction of 3-dehydroshikimate (DHSA) to yield shikimate (SA). The polypeptide is Shikimate dehydrogenase (NADP(+)) (Methanothrix thermoacetophila (strain DSM 6194 / JCM 14653 / NBRC 101360 / PT) (Methanosaeta thermophila)).